The sequence spans 112 residues: Conotoxin vil14.4 (112 aa).

An N-terminal signal peptide occupies residues 1 to 22 (MGFRVLVLVVMATTSALPFTFF). Residues 23–85 (EEPGRSPFRP…FAELSVGQRR (63 aa)) constitute a propeptide that is removed on maturation. Cystine bridges form between Cys-91–Cys-111 and Cys-95–Cys-107.

This sequence belongs to the conotoxin R superfamily. As to expression, expressed by the venom duct.

The protein resides in the secreted. The chain is Conotoxin vil14.4 from Conus villepinii (Villepin's cone).